The sequence spans 150 residues: T-complex protein 1 subunit beta (150 aa).

Aspartate 35 serves as a coordination point for Mg(2+). Glycine 36, threonine 37, threonine 38, and serine 39 together coordinate ADP. Residues glycine 36, threonine 37, and threonine 38 each coordinate ATP.

Belongs to the TCP-1 chaperonin family. Component of the chaperonin-containing T-complex (TRiC), a hexadecamer composed of two identical back-to-back stacked rings enclosing a protein folding chamber. Each ring is made up of eight different subunits: TCP1/CCT1, CCT2, CCT3, CCT4, CCT5, CCT6A/CCT6, CCT7, CCT8. Interacts with PACRG. Interacts with FLCN. Interacts with DLEC1. Interacts with SVEP1.

It localises to the cytoplasm. It carries out the reaction ATP + H2O = ADP + phosphate + H(+). Its function is as follows. Component of the chaperonin-containing T-complex (TRiC), a molecular chaperone complex that assists the folding of actin, tubulin and other proteins upon ATP hydrolysis. The TRiC complex mediates the folding of WRAP53/TCAB1, thereby regulating telomere maintenance. As part of the TRiC complex may play a role in the assembly of BBSome, a complex involved in ciliogenesis regulating transports vesicles to the cilia. The polypeptide is T-complex protein 1 subunit beta (Mesocricetus auratus (Golden hamster)).